Reading from the N-terminus, the 428-residue chain is 3-phosphoshikimate 1-carboxyvinyltransferase (428 aa).

3-phosphoshikimate-binding residues include lysine 22, serine 23, and arginine 27. Position 22 (lysine 22) interacts with phosphoenolpyruvate. Phosphoenolpyruvate is bound by residues glycine 98 and arginine 126. 3-phosphoshikimate is bound by residues serine 172, serine 173, glutamine 174, serine 200, aspartate 316, asparagine 339, and lysine 343. A phosphoenolpyruvate-binding site is contributed by glutamine 174. Catalysis depends on aspartate 316, which acts as the Proton acceptor. Residues arginine 347, arginine 389, and lysine 414 each contribute to the phosphoenolpyruvate site.

Belongs to the EPSP synthase family. As to quaternary structure, monomer.

It localises to the cytoplasm. It catalyses the reaction 3-phosphoshikimate + phosphoenolpyruvate = 5-O-(1-carboxyvinyl)-3-phosphoshikimate + phosphate. It functions in the pathway metabolic intermediate biosynthesis; chorismate biosynthesis; chorismate from D-erythrose 4-phosphate and phosphoenolpyruvate: step 6/7. In terms of biological role, catalyzes the transfer of the enolpyruvyl moiety of phosphoenolpyruvate (PEP) to the 5-hydroxyl of shikimate-3-phosphate (S3P) to produce enolpyruvyl shikimate-3-phosphate and inorganic phosphate. The sequence is that of 3-phosphoshikimate 1-carboxyvinyltransferase from Psychromonas ingrahamii (strain DSM 17664 / CCUG 51855 / 37).